The following is an 83-amino-acid chain: Apolipoprotein C-I (83 aa).

The first 26 residues, 1 to 26, serve as a signal peptide directing secretion; it reads MRLFLSLPVLVVVLSIVLEGPAPAQG.

It belongs to the apolipoprotein C1 family. Synthesized mainly in liver and to a minor degree in intestine. Also found in the lung and spleen.

The protein resides in the secreted. Inhibitor of lipoprotein binding to the low density lipoprotein (LDL) receptor, LDL receptor-related protein, and very low density lipoprotein (VLDL) receptor. Associates with high density lipoproteins (HDL) and the triacylglycerol-rich lipoproteins in the plasma and makes up about 10% of the protein of the VLDL and 2% of that of HDL. Appears to interfere directly with fatty acid uptake and is also the major plasma inhibitor of cholesteryl ester transfer protein (CETP). Binds free fatty acids and reduces their intracellular esterification. Modulates the interaction of APOE with beta-migrating VLDL and inhibits binding of beta-VLDL to the LDL receptor-related protein. This Homo sapiens (Human) protein is Apolipoprotein C-I (APOC1).